The following is a 357-amino-acid chain: Probable butyrate kinase (357 aa).

This sequence belongs to the acetokinase family.

Its subcellular location is the cytoplasm. It carries out the reaction butanoate + ATP = butanoyl phosphate + ADP. The protein is Probable butyrate kinase of Thermotoga petrophila (strain ATCC BAA-488 / DSM 13995 / JCM 10881 / RKU-1).